The chain runs to 213 residues: Andrastin A biosynthesis cluster protein B (213 aa).

In terms of biological role, part of the gene cluster that mediates the biosynthesis of andrastins, meroterpenoid compounds that exhibit inhibitory activity against ras farnesyltransferase, suggesting that they could be promising leads for antitumor agents. The first step of the pathway is the synthesis of 3,5-dimethylorsellinic acid (DMOA) by the polyketide synthase adrD via condensation of one acetyl-CoA starter unit with 3 malonyl-CoA units and 2 methylations. DMAO is then converted to farnesyl-DMAO by the prenyltransferase adrG. The methyltransferase adrK catalyzes the methylation of the carboxyl group of farnesyl-DMAO to farnesyl-DMAO methyl ester which is further converted to epoxyfarnesyl-DMAO methyl ester by the FAD-dependent monooxygenase adrH. The terpene cyclase adrI then catalyzes the carbon skeletal rearrangement to generate the andrastin E, the first compound in the pathway having the andrastin scaffold, with the tetracyclic ring system. The post-cyclization tailoring enzymes adrF, adrE, adrJ, and adrA, are involved in the conversion of andrastin E into andrastin A. The short chain dehydrogenase adrF is responsible for the oxidation of the C-3 a hydroxyl group of andrastin E to yield the corresponding ketone, andrastin D. The ketoreductase adrE stereoselectively reduces the carbonyl moiety to reverse the stereochemistry of the C-3 position to yield andrastin F. The acetyltransferase adrJ is the acetyltransferase that attaches the acetyl group to the C-3 hydroxyl group of andrastin F to yield andrastin C. Finally, the cytochrome P450 monooxygenase adrA catalyzes two sequential oxidation reactions of the C-23 methyl group, to generate the corresponding alcohol andrastin B, and aldehyde andrastin A. The polypeptide is Andrastin A biosynthesis cluster protein B (Penicillium rubens (strain ATCC 28089 / DSM 1075 / NRRL 1951 / Wisconsin 54-1255) (Penicillium chrysogenum)).